The sequence spans 157 residues: Recombination endonuclease VII (157 aa).

The Zn(2+) site is built by Cys23 and Cys26. Position 40 (Asp40) interacts with Ca(2+). Cys58 and Cys61 together coordinate Zn(2+). Asn62 serves as a coordination point for Ca(2+).

In terms of assembly, homodimer. It depends on Ca(2+) as a cofactor. Zn(2+) is required as a cofactor.

Cleaves DNA cruciform and Y-structures as well as heteroduplex loops. Resolves Holliday junctions, recognizes a broad spectrum of DNA substrates ranging from branched DNAs to single base mismatches. This Enterobacteria phage T4 (Bacteriophage T4) protein is Recombination endonuclease VII (49).